The sequence spans 107 residues: uncharacterized protein (107 aa).

This is an uncharacterized protein from Pasteurella multocida (strain Pm70).